The following is a 619-amino-acid chain: Probable ATP-dependent RNA helicase DDX59 (619 aa).

A Glycyl lysine isopeptide (Lys-Gly) (interchain with G-Cter in SUMO2) cross-link involves residue lysine 26. The segment at 57-98 (SESCPFPSPGGQLAEVHSVSPEQGAKDSHPSEEPVKSFSKTQ) is disordered. 2 positions are modified to phosphoserine: serine 64 and serine 76. Residues 80–91 (GAKDSHPSEEPV) are compositionally biased toward basic and acidic residues. An HIT-type zinc finger spans residues 104–133 (GEPICVVCGRYGEYICDKTDEDVCSLECKA). Positions 142–161 (KEEKSKLSNPQKADSEPESP) are disordered. 2 positions are modified to phosphoserine: serine 156 and serine 160. The short motif at 203–231 (IDFEHCSLPEVLNHNLKKSGYEVPTPIQM) is the Q motif element. The Helicase ATP-binding domain occupies 234–405 (IPVGLLGRDI…SQLLHNPVRI (172 aa)). 247 to 254 (ADTGSGKT) contributes to the ATP binding site. Positions 353–356 (DEAD) match the DEAD box motif. The region spanning 416–579 (NVRQIILWVE…ILPPQLLNSP (164 aa)) is the Helicase C-terminal domain.

This sequence belongs to the DEAD box helicase family. DDX59 subfamily. In terms of assembly, interacts (via HIT-type zinc finger) with the RUVBL1/RUVBL2 complex in the presence of ADP. Expressed in fibroblasts (at protein level).

It localises to the cytoplasm. The protein resides in the nucleus. The catalysed reaction is ATP + H2O = ADP + phosphate + H(+). This is Probable ATP-dependent RNA helicase DDX59 (DDX59) from Homo sapiens (Human).